Reading from the N-terminus, the 466-residue chain is MSIASVASVFKGEHAVGSKVTVRGWVRTRRDSKAGISFLAVYDGSCFNPIQGVVPNSLDNYDNEVLKLTAGCSVVMTGDVVESPGAGQAFELQVTDIEVAGWVDDPDTYPMAAKRHSIEHLRELAHLRPRTNIIGAVARVRNCLSQAIHRFYHEEGFIWVSTPLITASDCEGAGEMFRVSTLDMENLPRTDAGKVDYDKDFFGKEAFLTVSGQLNAETYACALSKVYTFGPTFRAENSNTSRHLAEFWMVEPEVAFANLNDIAGLAEAMLKYAFNAVLTERMDDLTFFAQHVDKTVIDRLQSFVSSDFAQVDYTDAVEILQNCGRTFEFPVSWGIDLSSEHERYLAEEHFKAPVVVKNYPKDIKAFYMRLNDDGKTVAAMDVLAPGIGEIIGGSQREERLDVLDMRLAEMDLNQEDYWWYRDMRRYGTVPHAGFGLGFERLVSYVTGVNNIRDVIPFPRAPRTANF.

The protein belongs to the class-II aminoacyl-tRNA synthetase family. In terms of assembly, homodimer.

Its subcellular location is the cytoplasm. It carries out the reaction tRNA(Asn) + L-asparagine + ATP = L-asparaginyl-tRNA(Asn) + AMP + diphosphate + H(+). This is Asparagine--tRNA ligase from Shewanella baltica (strain OS155 / ATCC BAA-1091).